Consider the following 216-residue polypeptide: 3-isopropylmalate dehydratase small subunit (216 aa).

This sequence belongs to the LeuD family. LeuD type 1 subfamily. As to quaternary structure, heterodimer of LeuC and LeuD.

The enzyme catalyses (2R,3S)-3-isopropylmalate = (2S)-2-isopropylmalate. The protein operates within amino-acid biosynthesis; L-leucine biosynthesis; L-leucine from 3-methyl-2-oxobutanoate: step 2/4. Its function is as follows. Catalyzes the isomerization between 2-isopropylmalate and 3-isopropylmalate, via the formation of 2-isopropylmaleate. The sequence is that of 3-isopropylmalate dehydratase small subunit from Bordetella avium (strain 197N).